We begin with the raw amino-acid sequence, 869 residues long: Dynamin-3 (869 aa).

In terms of domain architecture, Dynamin-type G spans 28–294 (LLELPQIAVV…LTNHIRDTLP (267 aa)). Residues 38–45 (GGQSAGKS) form a G1 motif region. 38–46 (GGQSAGKSS) serves as a coordination point for GTP. The interval 64–66 (VTR) is G2 motif. Residues 136–139 (DLPG) are G3 motif. The segment at 205–208 (TKLD) is G4 motif. 205 to 211 (TKLDLMD) lines the GTP pocket. At Tyr231 the chain carries Phosphotyrosine. The interval 235–238 (VNRS) is G5 motif. 236 to 239 (NRSQ) is a GTP binding site. Residue Lys299 is modified to N6-acetyllysine. The region spanning 515–621 (QGTNLPPSRQ…ACDSQEDVDS (107 aa)) is the PH domain. Residue Tyr603 is modified to Phosphotyrosine. Lys604 carries the post-translational modification N6-acetyllysine. A GED domain is found at 659-750 (VETIRNLVDS…IIGDISTATV (92 aa)). A disordered region spans residues 747–869 (TATVSTPAPP…IRPLESSLLD (123 aa)). Phosphoserine occurs at positions 769 and 773. Pro residues-rich tracts occupy residues 797–822 (PAIP…PPFP) and 832–855 (PQVP…PSPT). Position 853 is a phosphoserine (Ser853).

It belongs to the TRAFAC class dynamin-like GTPase superfamily. Dynamin/Fzo/YdjA family.

The protein localises to the cytoplasm. Its subcellular location is the cytoskeleton. The catalysed reaction is GTP + H2O = GDP + phosphate + H(+). Its function is as follows. Microtubule-associated force-producing protein involved in producing microtubule bundles and able to bind and hydrolyze GTP. Most probably involved in vesicular trafficking processes, in particular endocytosis. This Homo sapiens (Human) protein is Dynamin-3 (DNM3).